The primary structure comprises 103 residues: Small ribosomal subunit protein uS10 (103 aa).

Belongs to the universal ribosomal protein uS10 family. In terms of assembly, part of the 30S ribosomal subunit.

Functionally, involved in the binding of tRNA to the ribosomes. The protein is Small ribosomal subunit protein uS10 of Persephonella marina (strain DSM 14350 / EX-H1).